The following is a 522-amino-acid chain: Ribose import ATP-binding protein RbsA 1 (522 aa).

2 ABC transporter domains span residues 8–243 (LRIE…GRSI) and 249–496 (RERP…VSTN). 40-47 (GENGAGKS) is an ATP binding site. The segment at 492 to 522 (AVSTNQYKPDKSDKPDASAGKTDQKEAPRGH) is disordered. The span at 499 to 522 (KPDKSDKPDASAGKTDQKEAPRGH) shows a compositional bias: basic and acidic residues.

The protein belongs to the ABC transporter superfamily. Ribose importer (TC 3.A.1.2.1) family. As to quaternary structure, the complex is composed of an ATP-binding protein (RbsA), two transmembrane proteins (RbsC) and a solute-binding protein (RbsB).

The protein localises to the cell membrane. The catalysed reaction is D-ribose(out) + ATP + H2O = D-ribose(in) + ADP + phosphate + H(+). In terms of biological role, part of the ABC transporter complex RbsABC involved in ribose import. Responsible for energy coupling to the transport system. The polypeptide is Ribose import ATP-binding protein RbsA 1 (Streptomyces avermitilis (strain ATCC 31267 / DSM 46492 / JCM 5070 / NBRC 14893 / NCIMB 12804 / NRRL 8165 / MA-4680)).